The sequence spans 69 residues: Small, acid-soluble spore protein 1 (69 aa).

This sequence belongs to the alpha/beta-type SASP family.

Its function is as follows. SASP are bound to spore DNA. They are double-stranded DNA-binding proteins that cause DNA to change to an a-like conformation. They protect the DNA backbone from chemical and enzymatic cleavage and are thus involved in dormant spore's high resistance to UV light. This chain is Small, acid-soluble spore protein 1 (Su-1), found in Sporosarcina ureae.